Consider the following 84-residue polypeptide: Large ribosomal subunit protein bL27 (84 aa).

The disordered stretch occupies residues 1 to 20 (MAHKKAGGSTRNGRDSNPKY).

The protein belongs to the bacterial ribosomal protein bL27 family.

The chain is Large ribosomal subunit protein bL27 from Francisella philomiragia subsp. philomiragia (strain ATCC 25017 / CCUG 19701 / FSC 153 / O#319-036).